We begin with the raw amino-acid sequence, 546 residues long: Protein RDR1 (546 aa).

A DNA-binding region (zn(2)-C6 fungal-type) is located at residues 20-46; sequence CVPCRERKRKCNGKSPCEMCVAYGYVC.

It is found in the nucleus. Its function is as follows. Transcriptional repressor of multidrug resistance genes, such as PDR5. Required for growth on non-fermentable carbon sources like lactate or glycerol. In Saccharomyces cerevisiae (strain ATCC 204508 / S288c) (Baker's yeast), this protein is Protein RDR1 (RDR1).